The primary structure comprises 154 residues: Lipoprotein signal peptidase (154 aa).

2 consecutive transmembrane segments (helical) span residues 55–75 (GHMW…IYIM) and 84–104 (LFSI…IDRV). Active-site residues include aspartate 111 and aspartate 129. The helical transmembrane segment at 124-144 (IFNVADASLSVGVVLMLVYVF) threads the bilayer.

It belongs to the peptidase A8 family.

The protein resides in the cell membrane. It catalyses the reaction Release of signal peptides from bacterial membrane prolipoproteins. Hydrolyzes -Xaa-Yaa-Zaa-|-(S,diacylglyceryl)Cys-, in which Xaa is hydrophobic (preferably Leu), and Yaa (Ala or Ser) and Zaa (Gly or Ala) have small, neutral side chains.. It functions in the pathway protein modification; lipoprotein biosynthesis (signal peptide cleavage). This protein specifically catalyzes the removal of signal peptides from prolipoproteins. The protein is Lipoprotein signal peptidase of Listeria welshimeri serovar 6b (strain ATCC 35897 / DSM 20650 / CCUG 15529 / CIP 8149 / NCTC 11857 / SLCC 5334 / V8).